The sequence spans 258 residues: Triosephosphate isomerase (258 aa).

N9–K11 is a binding site for substrate. The Electrophile role is filled by H95. E167 serves as the catalytic Proton acceptor. Substrate is bound by residues G173 and S212.

This sequence belongs to the triosephosphate isomerase family. As to quaternary structure, homodimer.

Its subcellular location is the cytoplasm. The catalysed reaction is D-glyceraldehyde 3-phosphate = dihydroxyacetone phosphate. It participates in carbohydrate biosynthesis; gluconeogenesis. The protein operates within carbohydrate degradation; glycolysis; D-glyceraldehyde 3-phosphate from glycerone phosphate: step 1/1. In terms of biological role, involved in the gluconeogenesis. Catalyzes stereospecifically the conversion of dihydroxyacetone phosphate (DHAP) to D-glyceraldehyde-3-phosphate (G3P). This chain is Triosephosphate isomerase, found in Blochmanniella pennsylvanica (strain BPEN).